The following is a 72-amino-acid chain: Translation initiation factor IF-1 (72 aa).

In terms of domain architecture, S1-like spans 1 to 72 (MAKDDVIEVE…TRGRITYRFK (72 aa)).

The protein belongs to the IF-1 family. In terms of assembly, component of the 30S ribosomal translation pre-initiation complex which assembles on the 30S ribosome in the order IF-2 and IF-3, IF-1 and N-formylmethionyl-tRNA(fMet); mRNA recruitment can occur at any time during PIC assembly.

The protein localises to the cytoplasm. One of the essential components for the initiation of protein synthesis. Stabilizes the binding of IF-2 and IF-3 on the 30S subunit to which N-formylmethionyl-tRNA(fMet) subsequently binds. Helps modulate mRNA selection, yielding the 30S pre-initiation complex (PIC). Upon addition of the 50S ribosomal subunit IF-1, IF-2 and IF-3 are released leaving the mature 70S translation initiation complex. In Streptococcus gordonii (strain Challis / ATCC 35105 / BCRC 15272 / CH1 / DL1 / V288), this protein is Translation initiation factor IF-1.